A 587-amino-acid polypeptide reads, in one-letter code: Aspartate--tRNA ligase (587 aa).

Residue Glu173 coordinates L-aspartate. The aspartate stretch occupies residues 197–200 (QTLK). Residue Arg219 coordinates L-aspartate. Residues 219-221 (RDE) and Gln228 each bind ATP. His446 serves as a coordination point for L-aspartate. Glu480 is a binding site for ATP. Arg487 is a binding site for L-aspartate. 532–535 (GLDR) serves as a coordination point for ATP.

Belongs to the class-II aminoacyl-tRNA synthetase family. Type 1 subfamily. Homodimer.

It is found in the cytoplasm. The catalysed reaction is tRNA(Asp) + L-aspartate + ATP = L-aspartyl-tRNA(Asp) + AMP + diphosphate. Its function is as follows. Catalyzes the attachment of L-aspartate to tRNA(Asp) in a two-step reaction: L-aspartate is first activated by ATP to form Asp-AMP and then transferred to the acceptor end of tRNA(Asp). This Phocaeicola vulgatus (strain ATCC 8482 / DSM 1447 / JCM 5826 / CCUG 4940 / NBRC 14291 / NCTC 11154) (Bacteroides vulgatus) protein is Aspartate--tRNA ligase.